The following is a 418-amino-acid chain: Argininosuccinate synthase (418 aa).

Position 16–24 (16–24 (AYSGGLDTS)) interacts with ATP. Residue tyrosine 95 participates in L-citrulline binding. Position 125 (glycine 125) interacts with ATP. The L-aspartate site is built by threonine 127, asparagine 131, and aspartate 132. Asparagine 131 contributes to the L-citrulline binding site. L-citrulline is bound by residues arginine 135, serine 183, glutamate 267, and tyrosine 279.

The protein belongs to the argininosuccinate synthase family. Type 1 subfamily. As to quaternary structure, homotetramer.

It is found in the cytoplasm. It catalyses the reaction L-citrulline + L-aspartate + ATP = 2-(N(omega)-L-arginino)succinate + AMP + diphosphate + H(+). It functions in the pathway amino-acid biosynthesis; L-arginine biosynthesis; L-arginine from L-ornithine and carbamoyl phosphate: step 2/3. In Bifidobacterium adolescentis (strain ATCC 15703 / DSM 20083 / NCTC 11814 / E194a), this protein is Argininosuccinate synthase.